A 104-amino-acid polypeptide reads, in one-letter code: Large ribosomal subunit protein uL24 (104 aa).

The protein belongs to the universal ribosomal protein uL24 family. In terms of assembly, part of the 50S ribosomal subunit.

Its function is as follows. One of two assembly initiator proteins, it binds directly to the 5'-end of the 23S rRNA, where it nucleates assembly of the 50S subunit. Functionally, one of the proteins that surrounds the polypeptide exit tunnel on the outside of the subunit. The polypeptide is Large ribosomal subunit protein uL24 (Pseudomonas fluorescens (strain SBW25)).